The primary structure comprises 848 residues: F-BAR domain only protein 2 (848 aa).

Positions 4 to 250 (PYFLENFWGN…NMENTSVESL (247 aa)) constitute an F-BAR domain. Residues 87 to 114 (HMELVRKLQELIKEVQKYVDEQAKNHKK) adopt a coiled-coil conformation. Disordered regions lie at residues 292–316 (IPGR…NASN) and 404–526 (LSPT…RAES). Phosphoserine is present on residues S405 and S417. A compositionally biased stretch (low complexity) spans 445–460 (PFGPTSTGSSSSLPQS). An MHD domain is found at 580 to 848 (ALPIAVAFTE…FATGRYMADC (269 aa)).

It belongs to the FCHO family. In terms of assembly, homodimer.

It is found in the membrane. It localises to the clathrin-coated pit. In terms of biological role, may function in an early step of clathrin-mediated endocytosis. The chain is F-BAR domain only protein 2 (fcho2) from Danio rerio (Zebrafish).